The following is a 557-amino-acid chain: Probable protein kinase UbiB (557 aa).

The 389-residue stretch at 121–509 (SFDTVPLASA…RKLQTRVVTA (389 aa)) folds into the Protein kinase domain. ATP is bound by residues 127–135 (LASASIAQV) and Lys154. The active-site Proton acceptor is the Asp289. Helical transmembrane passes span 506-526 (VVTA…YGLH) and 535-555 (VPVW…VAWL).

The protein belongs to the ABC1 family. UbiB subfamily.

It localises to the cell inner membrane. It functions in the pathway cofactor biosynthesis; ubiquinone biosynthesis [regulation]. Functionally, is probably a protein kinase regulator of UbiI activity which is involved in aerobic coenzyme Q (ubiquinone) biosynthesis. In Xanthomonas oryzae pv. oryzae (strain MAFF 311018), this protein is Probable protein kinase UbiB.